The following is a 166-amino-acid chain: QTSPMERFIVNLLDSTFDDRSSRPLHSVAPYWLHQPELNECNIGNSLGEVINEKDKFAVRADVSHFHPKELSVSVRDRELVIEGHHEERTDPAGHGSIERHFIRKYVLPEEVQPDTIESHLSDKGVLTISANKTAIGTTASRNIPIRASPKEPEANQKSAINDAKQ.

The sHSP domain maps to 38 to 149 (LNECNIGNSL…ASRNIPIRAS (112 aa)). A disordered region spans residues 140 to 166 (ASRNIPIRASPKEPEANQKSAINDAKQ).

This sequence belongs to the small heat shock protein (HSP20) family.

This is Small heat shock protein OV25-2 (OV25-2) from Onchocerca volvulus.